Here is a 110-residue protein sequence, read N- to C-terminus: PCNA-associated factor (110 aa).

A Glycyl lysine isopeptide (Lys-Gly) (interchain with G-Cter in ubiquitin) cross-link involves residue K15. A D-box motif is present at residues 23–34 (RKVLGSSTFVTN). Position 24 is an N6-acetyllysine; alternate (K24). A Glycyl lysine isopeptide (Lys-Gly) (interchain with G-Cter in ubiquitin); alternate cross-link involves residue K24. Position 28 is a phosphoserine (S28). The span at 29–39 (STFVTNSSGSS) shows a compositional bias: low complexity. Positions 29-110 (STFVTNSSGS…QPDHRDDENE (82 aa)) are disordered. A PIP-box motif is present at residues 61–71 (QKGIGEFFRLS). A Phosphoserine modification is found at S71. Residues 71–80 (SPKDSKKENQ) show a composition bias toward basic and acidic residues. Residues 77 to 79 (KEN) carry the KEN box motif. Residues 84–96 (EAGSSGLGKAKRK) carry the Initiation motif motif.

As to quaternary structure, interacts (when monoubiquitinated at Lys-15 and Lys-24) with PCNA. Interacts with isoform 2/p33ING1b of ING1. Interacts with BRCA1. In terms of processing, monoubiquitinated at Lys-15 and Lys-24 during normal S phase, promoting its association with PCNA. Also diubiquitinated at these 2 sites. Following DNA damage, monoubiquitin chains at Lys-15 and Lys-24 are probably extended, leading to disrupt the interaction with PCNA. Polyubiquitinated by the APC/C complex at the mitotic exit, leading to its degradation by the proteasome.

Its subcellular location is the nucleus. The protein resides in the cytoplasm. The protein localises to the perinuclear region. In terms of biological role, PCNA-binding protein that acts as a regulator of DNA repair during DNA replication. Following DNA damage, the interaction with PCNA is disrupted, facilitating the interaction between monoubiquitinated PCNA and the translesion DNA synthesis DNA polymerase eta (POLH) at stalled replisomes, facilitating the bypass of replication-fork-blocking lesions. Also acts as a regulator of centrosome number. The sequence is that of PCNA-associated factor from Rattus norvegicus (Rat).